A 1138-amino-acid polypeptide reads, in one-letter code: Eukaryotic translation initiation factor 3 subunit A (1138 aa).

In terms of domain architecture, PCI spans 319–502 (LQRMAAHVLL…NSIYFGTDLT (184 aa)). Disordered regions lie at residues 590 to 633 (NNAR…NEIQ) and 817 to 1138 (ERFR…VKRR). Composition is skewed to basic and acidic residues over residues 817-903 (ERFR…RVER), 923-967 (DRNE…KEND), 1003-1049 (GRDD…DQPQ), and 1058-1078 (DSPRQNDRDNRRTTGERRDVR). Positions 1082–1100 (PKEGGGGVSGGGAGGGGGN) are enriched in gly residues. A compositionally biased stretch (basic and acidic residues) spans 1107–1128 (PREEKAPPKREQAQDKENKAGD).

Belongs to the eIF-3 subunit A family. Component of the eukaryotic translation initiation factor 3 (eIF-3) complex. The eIF-3 complex interacts with pix.

It is found in the cytoplasm. Functionally, RNA-binding component of the eukaryotic translation initiation factor 3 (eIF-3) complex, which is involved in protein synthesis of a specialized repertoire of mRNAs and, together with other initiation factors, stimulates binding of mRNA and methionyl-tRNAi to the 40S ribosome. The eIF-3 complex specifically targets and initiates translation of a subset of mRNAs involved in cell proliferation. This is Eukaryotic translation initiation factor 3 subunit A from Drosophila virilis (Fruit fly).